The following is a 283-amino-acid chain: tRNA-cytidine(32) 2-sulfurtransferase (283 aa).

A PP-loop motif motif is present at residues 37 to 42; sequence SGGKDS. Cysteine 112, cysteine 115, and cysteine 203 together coordinate [4Fe-4S] cluster.

It belongs to the TtcA family. In terms of assembly, homodimer. Requires Mg(2+) as cofactor. It depends on [4Fe-4S] cluster as a cofactor.

It localises to the cytoplasm. It carries out the reaction cytidine(32) in tRNA + S-sulfanyl-L-cysteinyl-[cysteine desulfurase] + AH2 + ATP = 2-thiocytidine(32) in tRNA + L-cysteinyl-[cysteine desulfurase] + A + AMP + diphosphate + H(+). The protein operates within tRNA modification. Its function is as follows. Catalyzes the ATP-dependent 2-thiolation of cytidine in position 32 of tRNA, to form 2-thiocytidine (s(2)C32). The sulfur atoms are provided by the cysteine/cysteine desulfurase (IscS) system. In Legionella pneumophila (strain Corby), this protein is tRNA-cytidine(32) 2-sulfurtransferase.